Reading from the N-terminus, the 184-residue chain is ATP synthase subunit b, chloroplastic (184 aa).

Residues 27 to 49 traverse the membrane as a helical segment; sequence LATNPINLSVVLGVLIFFGKGVL.

It belongs to the ATPase B chain family. F-type ATPases have 2 components, F(1) - the catalytic core - and F(0) - the membrane proton channel. F(1) has five subunits: alpha(3), beta(3), gamma(1), delta(1), epsilon(1). F(0) has four main subunits: a(1), b(1), b'(1) and c(10-14). The alpha and beta chains form an alternating ring which encloses part of the gamma chain. F(1) is attached to F(0) by a central stalk formed by the gamma and epsilon chains, while a peripheral stalk is formed by the delta, b and b' chains.

The protein resides in the plastid. It is found in the chloroplast thylakoid membrane. Its function is as follows. F(1)F(0) ATP synthase produces ATP from ADP in the presence of a proton or sodium gradient. F-type ATPases consist of two structural domains, F(1) containing the extramembraneous catalytic core and F(0) containing the membrane proton channel, linked together by a central stalk and a peripheral stalk. During catalysis, ATP synthesis in the catalytic domain of F(1) is coupled via a rotary mechanism of the central stalk subunits to proton translocation. Component of the F(0) channel, it forms part of the peripheral stalk, linking F(1) to F(0). This is ATP synthase subunit b, chloroplastic from Gossypium barbadense (Sea Island cotton).